The chain runs to 146 residues: Snaclec coagulation factor IX/factor X-binding protein subunit B2 (146 aa).

An N-terminal signal peptide occupies residues 1-23 (MGRLIFVSFGLLVVFLSLSGTAA). Intrachain disulfides connect Cys25–Cys36, Cys53–Cys142, and Cys119–Cys134. A C-type lectin domain is found at 32–143 (YEGHCYKPFN…CRMMANFVCE (112 aa)).

This sequence belongs to the snaclec family. As to quaternary structure, heterodimer of subunits A and B2; disulfide-linked. In terms of tissue distribution, expressed by the venom gland.

The protein resides in the secreted. Functionally, anticoagulant protein which binds to the gamma-carboxyglutamic acid-domain regions of factors IX (F9) and factor X (F10) in the presence of calcium with a 1 to 1 stoichiometry. This chain is Snaclec coagulation factor IX/factor X-binding protein subunit B2, found in Trimeresurus stejnegeri (Chinese green tree viper).